The sequence spans 434 residues: Forkhead box protein A2 (434 aa).

A DNA-binding region (fork-head) is located at residues 149-243 (KPPYSYISLI…ENGCYLRRQK (95 aa)). Basic and acidic residues predominate over residues 249–262 (KKPSLREGGGKKLS). Residues 249 to 339 (KKPSLREGGG…VLSHEAQSHL (91 aa)) are disordered. Composition is skewed to low complexity over residues 263-291 (EGSS…SSSP) and 317-333 (ASQA…VLSH).

Its subcellular location is the nucleus. Its function is as follows. Acts as a transcriptional activator during early development, limiting the extent of mesoderm formation in the gastrula. Binds to DNA via the target sequence 5'-GT[AC]AACA-3', with 5'-GTAAACA-3' being the preferred binding site. The protein is Forkhead box protein A2 of Xenopus tropicalis (Western clawed frog).